The following is a 213-amino-acid chain: Achelase-1 (213 aa).

Residues 1-213 enclose the Peptidase S1 domain; it reads IVGGSVTTIG…RYTSWIQSNA (213 aa). A disulfide bridge connects residues cysteine 26 and cysteine 42. Catalysis depends on charge relay system residues histidine 41 and aspartate 86. Cysteine 155 and cysteine 172 form a disulfide bridge. Serine 188 functions as the Charge relay system in the catalytic mechanism.

The protein belongs to the peptidase S1 family. In terms of tissue distribution, hemolymph and saliva of the larval form (caterpillar).

The protein localises to the secreted. The protein resides in the extracellular space. Sensitive to serine proteinase inhibitors and thiol proteinase inhibitors. In terms of biological role, fibrinolytic activity; shows preferential cleavage of Arg-Gly bonds in all three fibrinogen chains. Contact with the caterpillars causes severe bleeding, due the anticoagulant effect of the protein. The protein is Achelase-1 of Lonomia achelous (Giant silkworm moth).